Reading from the N-terminus, the 364-residue chain is Probable dual-specificity RNA methyltransferase RlmN (364 aa).

E107 acts as the Proton acceptor in catalysis. One can recognise a Radical SAM core domain in the interval 113 to 346; the sequence is HEYGNSVCVT…ATIRREQGSD (234 aa). A disulfide bridge links C120 with C351. Positions 127, 131, and 134 each coordinate [4Fe-4S] cluster. S-adenosyl-L-methionine-binding positions include 177-178, S209, 232-234, and N308; these read GE and SLH. The active-site S-methylcysteine intermediate is C351.

This sequence belongs to the radical SAM superfamily. RlmN family. The cofactor is [4Fe-4S] cluster.

The protein localises to the cytoplasm. It catalyses the reaction adenosine(2503) in 23S rRNA + 2 reduced [2Fe-2S]-[ferredoxin] + 2 S-adenosyl-L-methionine = 2-methyladenosine(2503) in 23S rRNA + 5'-deoxyadenosine + L-methionine + 2 oxidized [2Fe-2S]-[ferredoxin] + S-adenosyl-L-homocysteine. The enzyme catalyses adenosine(37) in tRNA + 2 reduced [2Fe-2S]-[ferredoxin] + 2 S-adenosyl-L-methionine = 2-methyladenosine(37) in tRNA + 5'-deoxyadenosine + L-methionine + 2 oxidized [2Fe-2S]-[ferredoxin] + S-adenosyl-L-homocysteine. Specifically methylates position 2 of adenine 2503 in 23S rRNA and position 2 of adenine 37 in tRNAs. Confers resistance to some classes of antibiotics. This Staphylococcus epidermidis (strain ATCC 35984 / DSM 28319 / BCRC 17069 / CCUG 31568 / BM 3577 / RP62A) protein is Probable dual-specificity RNA methyltransferase RlmN.